Reading from the N-terminus, the 154-residue chain is Large ribosomal subunit protein uL13 (154 aa).

The protein belongs to the universal ribosomal protein uL13 family. Part of the 50S ribosomal subunit.

In terms of biological role, this protein is one of the early assembly proteins of the 50S ribosomal subunit, although it is not seen to bind rRNA by itself. It is important during the early stages of 50S assembly. The chain is Large ribosomal subunit protein uL13 from Bartonella henselae (strain ATCC 49882 / DSM 28221 / CCUG 30454 / Houston 1) (Rochalimaea henselae).